We begin with the raw amino-acid sequence, 258 residues long: Venom plasminogen activator LV-PA (258 aa).

Positions 1-18 (MVLITVLANLLILQLSYA) are cleaved as a signal peptide. Residues 19–24 (QKSSKL) constitute a propeptide that is removed on maturation. A Peptidase S1 domain is found at 25-249 (VFGGDECNIN…YTDWIQSIIA (225 aa)). N-linked (GlcNAc...) asparagine glycosylation occurs at N44. An intrachain disulfide couples C50 to C66. Residues H65 and D110 each act as charge relay system in the active site. 3 disulfide bridges follow: C142–C210, C174–C189, and C200–C225. Residue S204 is the Charge relay system of the active site.

The protein belongs to the peptidase S1 family. Snake venom subfamily. In terms of assembly, monomer. Post-translationally, N-glycosylated. PubMed:17034951 shows that it contains approximately 10% carbohydrates, PubMed:10871053 shows that it contains approximately 20% carbohydrates. As to expression, expressed by the venom gland.

The protein resides in the secreted. Its activity is regulated as follows. Inhibited by the serine protease inhibitors NPGB, PMSF, p-aminobenzamidine and aprotinin. Not inhibited by soybean trypsin inhibitor or EDTA. In terms of biological role, snake venom serine protease that activates plasminogen. Weakly hydrolyzes the alpha chain of human fibrinogen without releasing fibrinopeptide A. Does not hydrolyze plasma kallikrein or factor Xa. Does not clot fibrinogen. Does not affect platelet function. Induces hypotensive effects on rats. Shows a preferential cleavage at Lys-|-Xaa over Arg-|-Xaa bonds. In Lachesis muta muta (Bushmaster), this protein is Venom plasminogen activator LV-PA.